Here is a 602-residue protein sequence, read N- to C-terminus: Elongation factor 4 (602 aa).

The tr-type G domain occupies Ser7–Ala189. Residues Asp19–Thr24 and Asn136–Asp139 contribute to the GTP site.

The protein belongs to the TRAFAC class translation factor GTPase superfamily. Classic translation factor GTPase family. LepA subfamily.

It is found in the cell inner membrane. The enzyme catalyses GTP + H2O = GDP + phosphate + H(+). Functionally, required for accurate and efficient protein synthesis under certain stress conditions. May act as a fidelity factor of the translation reaction, by catalyzing a one-codon backward translocation of tRNAs on improperly translocated ribosomes. Back-translocation proceeds from a post-translocation (POST) complex to a pre-translocation (PRE) complex, thus giving elongation factor G a second chance to translocate the tRNAs correctly. Binds to ribosomes in a GTP-dependent manner. This Synechococcus sp. (strain CC9902) protein is Elongation factor 4.